Consider the following 343-residue polypeptide: MFSLPSLPSWLPGLPSLEWGSSLLDSLLQGLIGALGVLVLNSLLKVYFFVGCANDPQRRPEKERLRAQWASLETVHLAGLALFLTVVGSRVAALVVLEFSLRAVSTLLSLGKGSQGAAERLQLYLLCQYSLGCGLTCGLSFLQEGAPHRTLNLLLSLGLATLLGLGARRLHRHVCRLYELHSSQRYCGVCLGLLAHAHGLPQLLGRALAIAFAVGDLAAVALINQDFLTTSEAMRFWTPLTICYTLLVIYMQEEQRQHPGLQSQVQTVLVRMGGLFVLLLTVGRWLDLLGILVSLLGELWCLVGVRTLLDLCQIQDFPSQRPPVSTPSQPLPSAPQSQSSAPS.

Transmembrane regions (helical) follow at residues 30–50 (GLIG…YFFV), 77–97 (LAGL…LVVL), 121–141 (LQLY…GLSF), 145–167 (GAPH…GLGA), 203–223 (LLGR…VALI), 233–252 (AMRF…IYMQ), 263–283 (SQVQ…LTVG), and 285–305 (WLDL…LVGV). Over residues 320-333 (QRPPVSTPSQPLPS) the composition is skewed to pro residues. The disordered stretch occupies residues 320-343 (QRPPVSTPSQPLPSAPQSQSSAPS). Residues 334–343 (APQSQSSAPS) show a composition bias toward low complexity.

This sequence belongs to the TMEM82 family.

It localises to the membrane. This is Transmembrane protein 82 (TMEM82) from Homo sapiens (Human).